Here is a 680-residue protein sequence, read N- to C-terminus: Protein FAR1-RELATED SEQUENCE 11 (680 aa).

A disordered region spans residues 1–36 (MSDDPGQMLLIYDDPSDQRSLSLDDASSTEESPDDN). In terms of domain architecture, FAR1 spans 62–156 (EFYSTFAKRC…ANHHNHELLE (95 aa)). Residues 277-373 (AVVFDTTHRL…CIWMVVGKFP (97 aa)) enclose the MULE domain. The segment at 556–589 (YWVPQEGIISCSCQLFEFSGFLCRHALRVLSTGN) adopts an SWIM-type zinc-finger fold.

Belongs to the FHY3/FAR1 family. In terms of tissue distribution, expressed in hypocotyls, rosette and cauline leaves, inflorescences stems, flowers and siliques.

It is found in the nucleus. Functionally, putative transcription activator involved in regulating light control of development. The chain is Protein FAR1-RELATED SEQUENCE 11 (FRS11) from Arabidopsis thaliana (Mouse-ear cress).